The following is a 248-amino-acid chain: Probable transcriptional regulatory protein Atu3727 (248 aa).

Residues 1–21 (MAGHSQFKNIMHRKGKQDSVR) form a disordered region.

This sequence belongs to the TACO1 family.

The protein localises to the cytoplasm. The protein is Probable transcriptional regulatory protein Atu3727 of Agrobacterium fabrum (strain C58 / ATCC 33970) (Agrobacterium tumefaciens (strain C58)).